Here is a 432-residue protein sequence, read N- to C-terminus: MVQQINIIDAKDHVDEKVKIGAWLTNKRSSGKIAFLQLRDGSAFFQGVVVKSQVSEEVFELAKEVKQEASMWITGVIHEDSRSKFGYEIEVEDIVVVGESEEYPITPKEHGVDFLLDHRHLWLRSKRPWAIMNIRNEVIRGTYEFFNQEGFIKMDSPILTGSAPEGTTELFHTEYFDRDAYLSQSGQLYAEAGALAYGKVFTFGPTFRAEKSKTRRHLIEFWMIEPEMAFMHQEQSLEVQERYIAFLVQGVIDHCQYALDILGRDVETLKKYTKLPYPRISYDEAIELLKENDFDVDWGVDFGSPEETFLADHFDQPVFVLNYPKAIKPFYMKPHPTRDDVVICADLLAPEGYGEIIGGSERATDYNYLLDQIKQAGLNPDDYAWYLDLRKYGSVPHAGFGLGLERFLTWITAEDHVRETIPFPRLLNRIYP.

Belongs to the class-II aminoacyl-tRNA synthetase family. As to quaternary structure, homodimer.

The protein resides in the cytoplasm. It catalyses the reaction tRNA(Asn) + L-asparagine + ATP = L-asparaginyl-tRNA(Asn) + AMP + diphosphate + H(+). This chain is Asparagine--tRNA ligase 2 (asnS2), found in Lactiplantibacillus plantarum (strain ATCC BAA-793 / NCIMB 8826 / WCFS1) (Lactobacillus plantarum).